We begin with the raw amino-acid sequence, 137 residues long: MNFKYIVAVSILIASAYARSEENDIQSLSQRDVLEEESLREIRGIGGALLSAAKVGLKGLAKGLAEHFANGKRTAEEREVMKRLEAAMRDLDSFEHPEEASEKETRGFNQEEKEKRIIGPVLGLVGSALGGLLKKIG.

The first 18 residues, 1–18 (MNFKYIVAVSILIASAYA), serve as a signal peptide directing secretion. Position 70 is an asparagine amide (Asn-70). Residues 91–112 (LDSFEHPEEASEKETRGFNQEE) form a disordered region. Ile-118 carries the D-allo-isoleucine modification. Ile-136 carries the isoleucine amide modification.

It belongs to the bombinin family. As to expression, expressed by the skin glands.

The protein resides in the secreted. Its function is as follows. Has antimicrobial activity, but no hemolytic activity. Preliminary evidence indicates that this peptide does not lyse and thus kill the bacteria by its antimicrobial activity. Functionally, bombinin H has antibacterial and hemolytic activity. The chain is Bombinin-like peptides 1 from Bombina variegata (Yellow-bellied toad).